Here is a 150-residue protein sequence, read N- to C-terminus: MKVIFLADVKGKGKKGEIKEVPTGYAQNFLIKKNLAKEATSQSIGELKGKQKAEEKAQAEILAEAQAVKAVLDEDKTRVQFQEKVGPDGRTFGSITAKKISEELQKQFGVKVDKRHIVLDHPIRAIGLIEVPVKLHKEVTAEIKLAITEA.

Belongs to the bacterial ribosomal protein bL9 family.

Functionally, binds to the 23S rRNA. The polypeptide is Large ribosomal subunit protein bL9 (Streptococcus pyogenes serotype M3 (strain SSI-1)).